The chain runs to 950 residues: Serine/threonine-protein phosphatase 4 regulatory subunit 1 (950 aa).

9 HEAT repeats span residues 1–25, 26–63, 65–81, 82–119, 127–164, 168–206, 208–246, 248–285, and 287–324; these read MADL…DYSS, ESDV…IFNR, MVAR…CDDE, RDCI…FCQE, AFSK…QELI, DVET…MVGK, ITER…VVGQ, ATEE…ATCQ, and IRRT…TFAN. Disordered stretches follow at residues 326-374, 413-438, and 473-499; these read SSSG…SVSN, ESHQ…RPEV, and EQNS…SPNI. Residues 332-365 are compositionally biased toward basic and acidic residues; that stretch reads FKEESKSSEEMSVENKNRTRDQEAPEDVQVRPED. HEAT repeat units follow at residues 505-542, 568-606, 698-734, 799-837, and 861-898; these read KELE…LDAH, INQE…FSPD, LTAA…LLHI, WISY…RCPK, and QFAV…EKDY. S935 carries the phosphoserine modification.

As to quaternary structure, serine/threonine-protein phosphatase 4 (PP4) occurs in different assemblies of the catalytic and one or more regulatory subunits. Component of the PP4 complex PPP4C-PPP4R1. Interacts with HDAC3. In terms of assembly, (Microbial infection) Interacts with merkel polyomavirus small tumor antigen; this interaction bridges small tumor antigen with NEMO to inhibit NF-kappa-B. Widely expressed with high expression in cultured mesangial cells. Isoform 1 and isoform 2 are expressed in renal tissues.

Functionally, regulatory subunit of serine/threonine-protein phosphatase 4. May play a role in regulation of cell division in renal glomeruli. The PPP4C-PPP4R1 PP4 complex may play a role in dephosphorylation and regulation of HDAC3. Plays a role in the inhibition of TNF-induced NF-kappa-B activation by regulating the dephosphorylation of TRAF2. Its function is as follows. (Microbial infection) Participates in merkel polyomavirus-mediated inhibition of NF-kappa-B by bridging viral small tumor antigen with NEMO. The polypeptide is Serine/threonine-protein phosphatase 4 regulatory subunit 1 (PPP4R1) (Homo sapiens (Human)).